The sequence spans 236 residues: Phosphoribosylaminoimidazole-succinocarboxamide synthase (236 aa).

It belongs to the SAICAR synthetase family.

The catalysed reaction is 5-amino-1-(5-phospho-D-ribosyl)imidazole-4-carboxylate + L-aspartate + ATP = (2S)-2-[5-amino-1-(5-phospho-beta-D-ribosyl)imidazole-4-carboxamido]succinate + ADP + phosphate + 2 H(+). Its pathway is purine metabolism; IMP biosynthesis via de novo pathway; 5-amino-1-(5-phospho-D-ribosyl)imidazole-4-carboxamide from 5-amino-1-(5-phospho-D-ribosyl)imidazole-4-carboxylate: step 1/2. The sequence is that of Phosphoribosylaminoimidazole-succinocarboxamide synthase from Streptococcus equi subsp. zooepidemicus (strain MGCS10565).